The sequence spans 272 residues: Ras-related protein RSR1 (272 aa).

10–17 (GAGGVGKS) lines the GTP pocket. An Effector region motif is present at residues 32–40 (YDPTIEDSY). GTP is bound by residues 57–61 (DTAGI) and 116–119 (NKAD). The interval 177–272 (DARNQSQQFS…KKNASTCTIL (96 aa)) is disordered. Composition is skewed to polar residues over residues 180-232 (NQSQ…STPV) and 245-258 (SGSS…ATSQ). A Cysteine methyl ester modification is found at Cys-269. The S-geranylgeranyl cysteine moiety is linked to residue Cys-269. The propeptide at 270 to 272 (TIL) is removed in mature form.

Belongs to the small GTPase superfamily. Ras family.

It localises to the cell membrane. It carries out the reaction GTP + H2O = GDP + phosphate + H(+). With respect to regulation, alternates between an inactive form bound to GDP and an active form bound to GTP. Activated by a guanine nucleotide-exchange factor (GEF) and inactivated by a GTPase-activating protein (GAP). Functionally, ras-related protein which binds GDP/GTP and possesses intrinsic GTPase activity. Involved in development of cell polarity during the cell division cycle, and essential for bud emergence. The polypeptide is Ras-related protein RSR1 (Saccharomyces cerevisiae (strain ATCC 204508 / S288c) (Baker's yeast)).